A 235-amino-acid polypeptide reads, in one-letter code: MKTKEDMQELYFPTPKLIEWENGVRQYSTVRGDTEVLMSYVPPHTNVEPHQHKEVQIGMVVSGELMMTVGDVTRKMTALESAYIAPPHVPHGARNDTDQEVIAIDIKRLKADETYTSPEDYFLDIFKTRDLLPGMEVTFFVEDWVEIMLAKIPGNGGEMPFHKHRNEQIGICIGGGYDMTVEGCTVEMKFGTAYFCEPREDHGAINRSEKESKSINIFFPPRYNRAKAKKMKADE.

Cupin type-2 domains lie at Val-41–Ile-106 and Lys-151–Asn-216. Residues His-50, His-52, Gln-56, His-91, His-162, His-164, Gln-168, and His-202 each coordinate a divalent metal cation. Tyr-223 lines the substrate pocket.

In terms of assembly, monomer. It depends on Fe(2+) as a cofactor. Requires Co(2+) as cofactor.

Its subcellular location is the cytoplasm. The enzyme catalyses 3-[(4R)-4-hydroxycyclohexa-1,5-dien-1-yl]-2-oxopropanoate = 3-[(1E,4R)-4-hydroxycyclohex-2-en-1-ylidene]pyruvate. Its pathway is antibiotic biosynthesis; bacilysin biosynthesis. Part of the bacABCDEF operon responsible for the biosynthesis of the nonribosomally synthesized dipeptide antibiotic bacilysin, composed of L-alanine and L-anticapsin. Bacilysin is an irreversible inactivator of the glutaminase domain of glucosamine synthetase. BacB catalyzes the allylic isomerization of the endocyclic-delta(4),delta(8)-7R-dihydro-hydroxyphenylpyruvate (en-H2HPP) to generate a mixture of 3E,7R- and 3Z, 7R-olefins (E/Z ration of 3/1) of the exocyclic-delta(3),delta(5)-dihydro-hydroxyphenylpyruvate (ex-H2HPP). This Bacillus subtilis (strain 168) protein is H2HPP isomerase.